We begin with the raw amino-acid sequence, 404 residues long: MKLPIYLDYSATCPVDPRVAEKMVQYMTMDGTFGNPASRSHRYGWQAEEAVDTAREQIAELLNADPREIVFTSGATESDNLAIKGAAHFYSKQGKHVITSKTEHKAVLDTCRQLEREGFEVTYLEPESNGLISLSKLEAAMRDDTVLVSIMHVNNEIGVIQDIEAIGELCRSRKIIFHVDAAQSAGKVAIDVQKLKVDLISLSAHKIYGPKGIGALYVRRKPRIRLEAQMHGGGHERGFRSGTLPTHQIVGMGEAFRIAKLDMEKDYQHALALRNRLLDGVKDMEAVTINGDLDQRVPHNLNISFAFVEGESLLMSLKDLAVSSGSACTSASLEPSYVLRALGLNDELAHSSIRFSFGRFTTEEEIDYAIEQIRVAVEKLRDMSPLWDMYKDGIDLNTVEWAHH.

Pyridoxal 5'-phosphate is bound by residues 75–76 (AT), Asn-155, Gln-183, and 203–205 (SAH). Lys-206 carries the N6-(pyridoxal phosphate)lysine modification. Residue Thr-243 participates in pyridoxal 5'-phosphate binding. Residue Cys-328 is the Cysteine persulfide intermediate of the active site. Cys-328 contributes to the [2Fe-2S] cluster binding site.

It belongs to the class-V pyridoxal-phosphate-dependent aminotransferase family. NifS/IscS subfamily. In terms of assembly, homodimer. Forms a heterotetramer with IscU, interacts with other sulfur acceptors. Requires pyridoxal 5'-phosphate as cofactor.

It localises to the cytoplasm. The catalysed reaction is (sulfur carrier)-H + L-cysteine = (sulfur carrier)-SH + L-alanine. The protein operates within cofactor biosynthesis; iron-sulfur cluster biosynthesis. In terms of biological role, master enzyme that delivers sulfur to a number of partners involved in Fe-S cluster assembly, tRNA modification or cofactor biosynthesis. Catalyzes the removal of elemental sulfur atoms from cysteine to produce alanine. Functions as a sulfur delivery protein for Fe-S cluster synthesis onto IscU, an Fe-S scaffold assembly protein, as well as other S acceptor proteins. The chain is Cysteine desulfurase IscS from Vibrio vulnificus (strain CMCP6).